A 409-amino-acid chain; its full sequence is Phosphoserine phosphatase SerB2 (409 aa).

ACT domains are found at residues leucine 8–aspartate 86 and glycine 102–leucine 174. The active-site Nucleophile is the aspartate 185. Residues aspartate 185 and aspartate 187 each contribute to the Mg(2+) site. Aspartate 187 acts as the Proton donor in catalysis. Substrate contacts are provided by residues glutamate 194, arginine 230, serine 273–glycine 274, and lysine 318. Aspartate 341 provides a ligand contact to Mg(2+). A substrate-binding site is contributed by asparagine 344.

This sequence belongs to the HAD-like hydrolase superfamily. SerB family. As to quaternary structure, homodimer. The dimeric population shifts to a tetramer in the presence of L-serine, which inactivates the enzyme. Mg(2+) serves as cofactor. Mn(2+) is required as a cofactor.

It localises to the secreted. Its subcellular location is the host cytoplasm. The protein localises to the host cytosol. The catalysed reaction is O-phospho-L-serine + H2O = L-serine + phosphate. The enzyme catalyses O-phospho-D-serine + H2O = D-serine + phosphate. It catalyses the reaction O-phospho-L-seryl-[protein] + H2O = L-seryl-[protein] + phosphate. It carries out the reaction O-phospho-L-threonyl-[protein] + H2O = L-threonyl-[protein] + phosphate. The protein operates within amino-acid biosynthesis; L-serine biosynthesis; L-serine from 3-phospho-D-glycerate: step 3/3. Its activity is regulated as follows. Clofazimine, a drug being evaluated for XDR and MDR tuberculosis, inhibits SerB2 phosphatase activity and reverses the various functional effects described above and interactions with host proteins. Is inhibited by known PSP inhibitors such as chlorpromazine, DL-AP3 and sodium orthovanadate, but not by okadaic acid. By binding to the ACT domains, amino-acids have various effects on enzyme activity: L-serine and L-glycine act as inhibitors, whereas L-lysine, L-tyrosine and L-phenylalanine are activators. High throughput screen has been performed to identify specific PSP inhibitors with activity against intracellular bacteria; the two best hits identified in this screen, clorobiocin and rosaniline, are bactericidal and kill bacteria in infected macrophages in a dose-dependent manner. Its function is as follows. Catalyzes the dephosphorylation of O-phospho-L-serine into L-serine, a step in the L-serine biosynthetic pathway. Exhibits high specificity for L-phosphoserine compared to substrates like L-phosphothreonine (5% relative activity) and L-phosphotyrosine (1.7% relative activity). Functionally, in the host, induces significant cytoskeleton rearrangements through cofilin dephosphorylation and its subsequent activation, and affects the expression of genes that regulate actin dynamics. It specifically interacts with HSP90, HSP70 and HSP27 that block apoptotic pathways but not with other HSPs. Also interacts with GAPDH. It actively dephosphorylates MAP kinase p38 and NF-kappa B p65 (specifically at Ser-536) that play crucial roles in inflammatory and immune responses. This in turn leads to down-regulation of Interleukin 8, a chemotactic and inflammatory cytokine. Thus might help the pathogen to evade the host's immune response. Exogenous addition of purified SerB2 protein to human THP-1 cells (that can be differentiated into macrophage-like cells) induces microtubule rearrangements; the phosphatase activity is co-related to the elicited rearrangements, while addition of the ACT-domains alone elicits no rearrangements. The sequence is that of Phosphoserine phosphatase SerB2 from Mycobacterium tuberculosis (strain ATCC 25618 / H37Rv).